A 127-amino-acid polypeptide reads, in one-letter code: NADPH-dependent 7-cyano-7-deazaguanine reductase (127 aa).

Catalysis depends on C40, which acts as the Thioimide intermediate. D47 functions as the Proton donor in the catalytic mechanism. Substrate-binding positions include 62-64 and 81-82; these read VEL and HE.

Belongs to the GTP cyclohydrolase I family. QueF type 1 subfamily.

Its subcellular location is the cytoplasm. It carries out the reaction 7-aminomethyl-7-carbaguanine + 2 NADP(+) = 7-cyano-7-deazaguanine + 2 NADPH + 3 H(+). It participates in tRNA modification; tRNA-queuosine biosynthesis. Functionally, catalyzes the NADPH-dependent reduction of 7-cyano-7-deazaguanine (preQ0) to 7-aminomethyl-7-deazaguanine (preQ1). This Campylobacter jejuni subsp. jejuni serotype O:6 (strain 81116 / NCTC 11828) protein is NADPH-dependent 7-cyano-7-deazaguanine reductase.